Reading from the N-terminus, the 295-residue chain is Glutamate 5-kinase (295 aa).

Position 9 (Lys-9) interacts with ATP. Substrate contacts are provided by Ser-49, Asp-136, and Asn-148. ATP-binding positions include 168 to 169 (TD) and 210 to 216 (TGGMLTK).

Belongs to the glutamate 5-kinase family.

The protein resides in the cytoplasm. It carries out the reaction L-glutamate + ATP = L-glutamyl 5-phosphate + ADP. Its pathway is amino-acid biosynthesis; L-proline biosynthesis; L-glutamate 5-semialdehyde from L-glutamate: step 1/2. Catalyzes the transfer of a phosphate group to glutamate to form L-glutamate 5-phosphate. The chain is Glutamate 5-kinase from Neisseria gonorrhoeae (strain NCCP11945).